The chain runs to 167 residues: HVA22-like protein b (167 aa).

3 helical membrane passes run 18–38, 47–67, and 68–88; these read VIAG…RAIE, QWLT…TFFR, and LLEW…WLVL.

Belongs to the DP1 family. As to expression, predominantly expressed in flower buds.

The protein resides in the membrane. The polypeptide is HVA22-like protein b (HVA22B) (Arabidopsis thaliana (Mouse-ear cress)).